The sequence spans 172 residues: Co-chaperone protein HscB homolog (172 aa).

Residues 2-69 (NHFELFNLPV…DSRAAYLLAL (68 aa)) form the J domain.

This sequence belongs to the HscB family. As to quaternary structure, interacts with HscA and stimulates its ATPase activity.

In terms of biological role, co-chaperone involved in the maturation of iron-sulfur cluster-containing proteins. Seems to help targeting proteins to be folded toward HscA. The protein is Co-chaperone protein HscB homolog of Acinetobacter baumannii (strain SDF).